The sequence spans 153 residues: Deoxyuridine 5'-triphosphate nucleotidohydrolase (153 aa).

Residues 71–73 (RSG), asparagine 84, 88–90 (TID), and lysine 98 each bind substrate.

It belongs to the dUTPase family. Mg(2+) serves as cofactor.

The catalysed reaction is dUTP + H2O = dUMP + diphosphate + H(+). It participates in pyrimidine metabolism; dUMP biosynthesis; dUMP from dCTP (dUTP route): step 2/2. Functionally, this enzyme is involved in nucleotide metabolism: it produces dUMP, the immediate precursor of thymidine nucleotides and it decreases the intracellular concentration of dUTP so that uracil cannot be incorporated into DNA. This Wolbachia pipientis subsp. Culex pipiens (strain wPip) protein is Deoxyuridine 5'-triphosphate nucleotidohydrolase.